The following is a 284-amino-acid chain: 2-dehydro-3-deoxyphosphooctonate aldolase (284 aa).

Belongs to the KdsA family.

Its subcellular location is the cytoplasm. It catalyses the reaction D-arabinose 5-phosphate + phosphoenolpyruvate + H2O = 3-deoxy-alpha-D-manno-2-octulosonate-8-phosphate + phosphate. It functions in the pathway carbohydrate biosynthesis; 3-deoxy-D-manno-octulosonate biosynthesis; 3-deoxy-D-manno-octulosonate from D-ribulose 5-phosphate: step 2/3. It participates in bacterial outer membrane biogenesis; lipopolysaccharide biosynthesis. This is 2-dehydro-3-deoxyphosphooctonate aldolase from Bordetella petrii (strain ATCC BAA-461 / DSM 12804 / CCUG 43448).